Reading from the N-terminus, the 942-residue chain is UvrABC system protein A (942 aa).

Residue 32–39 (GLSGSGKS) participates in ATP binding. Residues 251 to 278 (CPVCGFTVPELEPRLFSFNAPFGSCPTC) form a C4-type zinc finger. ABC transporter domains are found at residues 308 to 589 (WNPI…KKSI) and 609 to 937 (GNGR…HYLK). 641–648 (GVSGSGKS) provides a ligand contact to ATP. Residues 740–766 (CEACSGDGIIKIEMHFLPDVYVPCEVC) form a C4-type zinc finger.

The protein belongs to the ABC transporter superfamily. UvrA family. In terms of assembly, forms a heterotetramer with UvrB during the search for lesions.

Its subcellular location is the cytoplasm. In terms of biological role, the UvrABC repair system catalyzes the recognition and processing of DNA lesions. UvrA is an ATPase and a DNA-binding protein. A damage recognition complex composed of 2 UvrA and 2 UvrB subunits scans DNA for abnormalities. When the presence of a lesion has been verified by UvrB, the UvrA molecules dissociate. The chain is UvrABC system protein A from Streptococcus pyogenes serotype M1.